An 84-amino-acid polypeptide reads, in one-letter code: RNA-binding protein SAHV_0542 (84 aa).

This sequence belongs to the eukaryotic ribosomal protein eL8 family.

This Staphylococcus aureus (strain Mu3 / ATCC 700698) protein is RNA-binding protein SAHV_0542.